The primary structure comprises 171 residues: Photosystem I assembly protein Ycf3 (171 aa).

TPR repeat units lie at residues 35–68 (AFTY…EVDA), 72–105 (SYIL…NPYL), and 120–153 (GEQA…APTN).

The protein belongs to the Ycf3 family.

Its subcellular location is the plastid. It is found in the chloroplast thylakoid membrane. Functionally, essential for the assembly of the photosystem I (PSI) complex. May act as a chaperone-like factor to guide the assembly of the PSI subunits. The sequence is that of Photosystem I assembly protein Ycf3 from Nephroselmis olivacea (Green alga).